A 286-amino-acid polypeptide reads, in one-letter code: UDP-3-O-acyl-N-acetylglucosamine deacetylase (286 aa).

3 residues coordinate Zn(2+): His-79, His-237, and Asp-241. The active-site Proton donor is the His-264.

This sequence belongs to the LpxC family. It depends on Zn(2+) as a cofactor.

It carries out the reaction a UDP-3-O-[(3R)-3-hydroxyacyl]-N-acetyl-alpha-D-glucosamine + H2O = a UDP-3-O-[(3R)-3-hydroxyacyl]-alpha-D-glucosamine + acetate. The protein operates within glycolipid biosynthesis; lipid IV(A) biosynthesis; lipid IV(A) from (3R)-3-hydroxytetradecanoyl-[acyl-carrier-protein] and UDP-N-acetyl-alpha-D-glucosamine: step 2/6. Catalyzes the hydrolysis of UDP-3-O-myristoyl-N-acetylglucosamine to form UDP-3-O-myristoylglucosamine and acetate, the committed step in lipid A biosynthesis. The sequence is that of UDP-3-O-acyl-N-acetylglucosamine deacetylase from Brucella abortus (strain 2308).